Here is a 154-residue protein sequence, read N- to C-terminus: MLKEFKEFALKGNVMDLAVGVVIGGAFGKIVTSLVNDIITPLIGLLLGKVDFSGLFINLSGVPYKTIAEAKTAHAATLNYGLFLNSVIDFVIIAFSIFIVIKQLNRFKRKQEVEQAPVTTKECPHCISAIPVKATRCPNCTSMLETKGTALAHE.

The next 3 membrane-spanning stretches (helical) occupy residues 14–34, 38–58, and 81–101; these read VMDL…VTSL, IITP…LFIN, and GLFL…FIVI.

It belongs to the MscL family. Homopentamer.

The protein resides in the cell membrane. In terms of biological role, channel that opens in response to stretch forces in the membrane lipid bilayer. May participate in the regulation of osmotic pressure changes within the cell. This chain is Large-conductance mechanosensitive channel, found in Brevibacillus brevis (strain 47 / JCM 6285 / NBRC 100599).